Reading from the N-terminus, the 1051-residue chain is Eukaryotic translation initiation factor 3 subunit A (1051 aa).

Residues 92 to 121 (LKKFIELAEKKVTEAQAKADEIQSSLESAA) adopt a coiled-coil conformation. The PCI domain maps to 339-523 (MTKAASFVLL…GVLTFDTDIF (185 aa)). Residues 608–905 (RVLIEKKKEA…EAEARRAARK (298 aa)) adopt a coiled-coil conformation. 4 stretches are compositionally biased toward basic and acidic residues: residues 617–632 (AATDALQRKQREEETR), 642–664 (EAEKQRLLDEQREREKKRLRDEQ), 794–901 (KEVS…EARR), and 916–926 (AELERPVERTA). Disordered stretches follow at residues 617-664 (AATD…RDEQ) and 794-1051 (KEVS…QQQQ). Low complexity-rich tracts occupy residues 948–961 (KEAAGAAPAPAAAE) and 1010–1039 (SSSSQPPSRTQTPPAAAPASSDKPEASPAP).

This sequence belongs to the eIF-3 subunit A family. Component of the eukaryotic translation initiation factor 3 (eIF-3) complex.

The protein localises to the cytoplasm. Functionally, RNA-binding component of the eukaryotic translation initiation factor 3 (eIF-3) complex, which is involved in protein synthesis of a specialized repertoire of mRNAs and, together with other initiation factors, stimulates binding of mRNA and methionyl-tRNAi to the 40S ribosome. The eIF-3 complex specifically targets and initiates translation of a subset of mRNAs involved in cell proliferation. The sequence is that of Eukaryotic translation initiation factor 3 subunit A (tif32) from Aspergillus fumigatus (strain CBS 144.89 / FGSC A1163 / CEA10) (Neosartorya fumigata).